Here is a 556-residue protein sequence, read N- to C-terminus: Formate--tetrahydrofolate ligase 2 (556 aa).

Residue 65 to 72 participates in ATP binding; that stretch reads TPAGEGKS.

The protein belongs to the formate--tetrahydrofolate ligase family.

The catalysed reaction is (6S)-5,6,7,8-tetrahydrofolate + formate + ATP = (6R)-10-formyltetrahydrofolate + ADP + phosphate. It participates in one-carbon metabolism; tetrahydrofolate interconversion. The polypeptide is Formate--tetrahydrofolate ligase 2 (Streptococcus sanguinis (strain SK36)).